The following is an 894-amino-acid chain: Mitogen-activated protein kinase kinase kinase kinase 3 (894 aa).

An N-acetylmethionine modification is found at M1. Residues 16 to 273 (FELIQRIGSG…AEKLLQHPFV (258 aa)) enclose the Protein kinase domain. ATP is bound by residues 22 to 30 (IGSGTYGDV), K45, and K48. D136 acts as the Proton acceptor in catalysis. Phosphoserine is present on residues S329 and S398. A disordered region spans residues 410–536 (AHLEDDEGDD…DVPKPISNGL (127 aa)). Residues 473–487 (QVPPRPPPPRLPPHK) show a composition bias toward pro residues. A compositionally biased stretch (basic and acidic residues) spans 513–529 (NEHRGTNLSRKEKKDVP). The CNH domain maps to 556–867 (PLKIHCASSW…IFRLLGSDRV (312 aa)).

This sequence belongs to the protein kinase superfamily. STE Ser/Thr protein kinase family. STE20 subfamily. In terms of assembly, interacts with SH3GL2. Interaction appears to regulate MAP4K3-mediated JNK activation. Mg(2+) serves as cofactor. As to expression, ubiquitously expressed in all tissues examined, with high levels in heart, brain, placenta, skeletal muscle, kidney and pancreas and lower levels in lung and liver.

The enzyme catalyses L-seryl-[protein] + ATP = O-phospho-L-seryl-[protein] + ADP + H(+). It carries out the reaction L-threonyl-[protein] + ATP = O-phospho-L-threonyl-[protein] + ADP + H(+). In terms of biological role, serine/threonine kinase that plays a role in the response to environmental stress. Appears to act upstream of the JUN N-terminal pathway. Activator of the Hippo signaling pathway which plays a pivotal role in organ size control and tumor suppression by restricting proliferation and promoting apoptosis. MAP4Ks act in parallel to and are partially redundant with STK3/MST2 and STK4/MST2 in the phosphorylation and activation of LATS1/2, and establish MAP4Ks as components of the expanded Hippo pathway. The protein is Mitogen-activated protein kinase kinase kinase kinase 3 of Homo sapiens (Human).